The following is a 953-amino-acid chain: MKISELSPEYREPPSHAGLIADLSKAVSDVESFAASATAPEKLAADLRRILTSLASAASSSSFTESLSVQIWRLGTRLWNAVVDRANSAALAGGPAALAVEAEIRQAAPELLLLAGIPNGVPSAAAKVASFFHRSGLAWLDLGRVDLASACFEKATPLVSAAATEDRGVLLELNLARARAASDAGDQALAVALLSRSKPLAAASPEGAKSLAQGYLSIGEATLAAKHSNPAVEASTLFTEALDLCEKAASPSSSSPRTPPYGGATPKTPNLEGLKRRCLRFLALERLQAQDYEGVLRCIRVSRASMGLEEEHPSIGVMAMRAWIGSGNMAEADKELERLMANALATENLCVSAAEAYLAAAGPEAARKVLIALAARCRAGGAAAAVRVVKQVIDGGGGGIGRARAIAELVSDERVVALFDGPGNTHERGTMHALLWNCGTEHFRAKNYDTSADLIERSMLYVSRDEESRSRRADCFRVLSICHIALQHLDRALEFVNEAYKVEPNIKCAFLKVKINLQKGEEDEAFKQMKTMVGCVDFNPEFLTLTAHEAMSCKSFGVAVASLSYLLGLYSAERPMPMPEVAVLRNLIELLSREPGTEAEILKYSRRAKQRMADLGVESFFGSGIVGGRELNWFADLSWNMGLRASKEKKYNFGAEFFELAAEFFSSRNAECDENRSKVCKALIMAVTIMLNAEELNNSPLSDSDIKKGVEMLSRAGKLLPLISPSVPVASDQLEANNFLYLHTFNSYQLMGRMGTPAHPQQLQLIKNFASSKACTPANLLTLGVTASKGALPNMLAAEFSLKACITTALASQSPNYRVISCALRKLACLAGLQDLNGSKSDAAYDVFQQAYQIVVGLKEGEYPVEEGQWLVATAWNMSCLPLRLHQAKVARKWMKMGLDLARHLEGMKERIASMQTTFENFERVSGDEPDECSQEEAPKASISGSMSQPVLV.

The stretch at A129–A162 is one TPR 1 repeat. The interval A248 to P269 is disordered. TPR repeat units lie at residues H432–D465 and A473–I506. Residues V925–V953 are disordered. The span at I943 to V953 shows a compositional bias: polar residues.

Interacts with HEI10 and SHOC1.

It is found in the nucleus. Its subcellular location is the chromosome. Its function is as follows. Required for crossover formation, complete synapsis of homologous chromosomes and bivalent formation during meiosis. Is specific to recombination events resulting in interference-sensitive crossovers (class I meiotic crossover) and works cooperatively with MER3 to promote crossovers. In Oryza sativa subsp. japonica (Rice), this protein is TPR repeat-containing protein ZIP4.